The following is a 338-amino-acid chain: Glyceraldehyde-3-phosphate dehydrogenase (338 aa).

Residues 12-13 (RI), Asp-34, and Arg-79 each bind NAD(+). D-glyceraldehyde 3-phosphate contacts are provided by residues 150-152 (SCT), Thr-181, 210-211 (TG), and Arg-233. The active-site Nucleophile is Cys-151. Position 316 (Asn-316) interacts with NAD(+).

Belongs to the glyceraldehyde-3-phosphate dehydrogenase family. As to quaternary structure, homotetramer.

Its subcellular location is the cytoplasm. The catalysed reaction is D-glyceraldehyde 3-phosphate + phosphate + NAD(+) = (2R)-3-phospho-glyceroyl phosphate + NADH + H(+). It functions in the pathway carbohydrate degradation; glycolysis; pyruvate from D-glyceraldehyde 3-phosphate: step 1/5. This is Glyceraldehyde-3-phosphate dehydrogenase (GPD) from Phaffia rhodozyma (Yeast).